Here is a 287-residue protein sequence, read N- to C-terminus: Transcription cofactor vestigial-like protein 4 (287 aa).

Disordered regions lie at residues 44–68 and 251–287; these read ASAL…SMEP and AAKD…SVVS. 2 positions are modified to phosphoserine: serine 58 and serine 271. Positions 275 to 287 are enriched in low complexity; the sequence is HMVSHSHSPSVVS.

Belongs to the vestigial family. In terms of assembly, interacts with TEFs. Interacts with IRF2BP2.

The protein localises to the nucleus. May act as a specific coactivator for the mammalian TEFs. The sequence is that of Transcription cofactor vestigial-like protein 4 (Vgll4) from Mus musculus (Mouse).